The primary structure comprises 98 residues: NADH-ubiquinone oxidoreductase chain 4L (98 aa).

3 helical membrane passes run 1 to 21 (MPSI…GMLI), 29 to 49 (SLLC…LTAL), and 61 to 81 (IVLL…LVMV).

Belongs to the complex I subunit 4L family. Core subunit of respiratory chain NADH dehydrogenase (Complex I) which is composed of 45 different subunits.

The protein localises to the mitochondrion inner membrane. It catalyses the reaction a ubiquinone + NADH + 5 H(+)(in) = a ubiquinol + NAD(+) + 4 H(+)(out). Core subunit of the mitochondrial membrane respiratory chain NADH dehydrogenase (Complex I) which catalyzes electron transfer from NADH through the respiratory chain, using ubiquinone as an electron acceptor. Part of the enzyme membrane arm which is embedded in the lipid bilayer and involved in proton translocation. The sequence is that of NADH-ubiquinone oxidoreductase chain 4L (MT-ND4L) from Lepus europaeus (European hare).